The following is a 256-amino-acid chain: Thiazole synthase (256 aa).

Catalysis depends on Lys97, which acts as the Schiff-base intermediate with DXP. 1-deoxy-D-xylulose 5-phosphate-binding positions include Gly158, Ala184–Gly185, and Asn206–Thr207.

It belongs to the ThiG family. In terms of assembly, homotetramer. Forms heterodimers with either ThiH or ThiS.

The protein localises to the cytoplasm. The enzyme catalyses [ThiS sulfur-carrier protein]-C-terminal-Gly-aminoethanethioate + 2-iminoacetate + 1-deoxy-D-xylulose 5-phosphate = [ThiS sulfur-carrier protein]-C-terminal Gly-Gly + 2-[(2R,5Z)-2-carboxy-4-methylthiazol-5(2H)-ylidene]ethyl phosphate + 2 H2O + H(+). The protein operates within cofactor biosynthesis; thiamine diphosphate biosynthesis. Functionally, catalyzes the rearrangement of 1-deoxy-D-xylulose 5-phosphate (DXP) to produce the thiazole phosphate moiety of thiamine. Sulfur is provided by the thiocarboxylate moiety of the carrier protein ThiS. In vitro, sulfur can be provided by H(2)S. The sequence is that of Thiazole synthase from Flavobacterium psychrophilum (strain ATCC 49511 / DSM 21280 / CIP 103535 / JIP02/86).